The chain runs to 276 residues: NH(3)-dependent NAD(+) synthetase (276 aa).

Residue 46 to 53 participates in ATP binding; it reads GISGGQDS. Position 52 (D52) interacts with Mg(2+). Residue R141 participates in deamido-NAD(+) binding. T161 contacts ATP. A Mg(2+)-binding site is contributed by E166. 2 residues coordinate deamido-NAD(+): K174 and D181. Residues K190 and T212 each contribute to the ATP site. 261–262 lines the deamido-NAD(+) pocket; the sequence is HK.

It belongs to the NAD synthetase family. In terms of assembly, homodimer.

The enzyme catalyses deamido-NAD(+) + NH4(+) + ATP = AMP + diphosphate + NAD(+) + H(+). It participates in cofactor biosynthesis; NAD(+) biosynthesis; NAD(+) from deamido-NAD(+) (ammonia route): step 1/1. Catalyzes the ATP-dependent amidation of deamido-NAD to form NAD. Uses ammonia as a nitrogen source. In Limosilactobacillus fermentum (strain NBRC 3956 / LMG 18251) (Lactobacillus fermentum), this protein is NH(3)-dependent NAD(+) synthetase.